We begin with the raw amino-acid sequence, 88 residues long: Small ribosomal subunit protein uS17 (88 aa).

It belongs to the universal ribosomal protein uS17 family. As to quaternary structure, part of the 30S ribosomal subunit.

One of the primary rRNA binding proteins, it binds specifically to the 5'-end of 16S ribosomal RNA. In Mycoplasmopsis pulmonis (strain UAB CTIP) (Mycoplasma pulmonis), this protein is Small ribosomal subunit protein uS17.